The sequence spans 351 residues: Transmembrane protein 184 homolog DDB_G0279555 (351 aa).

A helical transmembrane segment spans residues 1 to 21; it reads MWIVAGVCSGVAILLSFYLIY. Asn26 carries an N-linked (GlcNAc...) asparagine glycan. The next 5 membrane-spanning stretches (helical) occupy residues 39–59, 73–93, 127–147, 162–182, and 206–226; these read ILIM…FVEL, YVLY…FDLV, FVLQ…VLET, YVWL…FLVL, and ILFF…FGVI. N-linked (GlcNAc...) asparagine glycosylation occurs at Asn236. Residues 241 to 261 form a helical membrane-spanning segment; it reads LQDFITCVEMVILAICHHFFF. N-linked (GlcNAc...) asparagine glycans are attached at residues Asn301 and Asn304. The disordered stretch occupies residues 327 to 351; it reads HNHPTTKKKDEESNLLEPEDKDIII. Over residues 339–351 the composition is skewed to acidic residues; that stretch reads SNLLEPEDKDIII.

The protein belongs to the TMEM184 family.

The protein localises to the cell membrane. Probable transporter. The sequence is that of Transmembrane protein 184 homolog DDB_G0279555 (tmem184C) from Dictyostelium discoideum (Social amoeba).